Reading from the N-terminus, the 358-residue chain is Peptide chain release factor 1 (358 aa).

Gln235 carries the N5-methylglutamine modification.

Belongs to the prokaryotic/mitochondrial release factor family. Post-translationally, methylated by PrmC. Methylation increases the termination efficiency of RF1.

Its subcellular location is the cytoplasm. Functionally, peptide chain release factor 1 directs the termination of translation in response to the peptide chain termination codons UAG and UAA. The chain is Peptide chain release factor 1 from Neisseria gonorrhoeae (strain ATCC 700825 / FA 1090).